The chain runs to 174 residues: MNENEKPQITEQKENQSALDQLIKEKHELLEHLRQLKAQFENYKRDSLREKEQVLKNANEYFLVKLIPVLDDMERAFEEVRRSKSYKNFYSGMEIIYKKLWKILNDEGLFKIEPKEKFDPFEHEAVERVETDEKEEYSILKILENGYKFHKKIVKPVKVQVAVRPRGENGAKTE.

This sequence belongs to the GrpE family. As to quaternary structure, homodimer.

The protein localises to the cytoplasm. Functionally, participates actively in the response to hyperosmotic and heat shock by preventing the aggregation of stress-denatured proteins, in association with DnaK and GrpE. It is the nucleotide exchange factor for DnaK and may function as a thermosensor. Unfolded proteins bind initially to DnaJ; upon interaction with the DnaJ-bound protein, DnaK hydrolyzes its bound ATP, resulting in the formation of a stable complex. GrpE releases ADP from DnaK; ATP binding to DnaK triggers the release of the substrate protein, thus completing the reaction cycle. Several rounds of ATP-dependent interactions between DnaJ, DnaK and GrpE are required for fully efficient folding. This chain is Protein GrpE, found in Pseudothermotoga lettingae (strain ATCC BAA-301 / DSM 14385 / NBRC 107922 / TMO) (Thermotoga lettingae).